A 252-amino-acid polypeptide reads, in one-letter code: Trans-aconitate 2-methyltransferase (252 aa).

It belongs to the methyltransferase superfamily. Tam family.

The protein resides in the cytoplasm. It catalyses the reaction trans-aconitate + S-adenosyl-L-methionine = (E)-3-(methoxycarbonyl)pent-2-enedioate + S-adenosyl-L-homocysteine. Its function is as follows. Catalyzes the S-adenosylmethionine monomethyl esterification of trans-aconitate. In Escherichia coli O7:K1 (strain IAI39 / ExPEC), this protein is Trans-aconitate 2-methyltransferase.